Here is a 178-residue protein sequence, read N- to C-terminus: Neuroblastoma suppressor of tumorigenicity 1 (178 aa).

The first 16 residues, 1–16 (MLWVLVGAVLPVMLLA), serve as a signal peptide directing secretion. Cystine bridges form between Cys34/Cys84, Cys48/Cys98, Cys58/Cys117, Cys62/Cys119, and Cys81/Cys122. Residues 34 to 123 (CEAKNITQIV…IVHCSCQACG (90 aa)) form the CTCK domain. The tract at residues 132–178 (NVYVQGEDSPGSQPGPHSHAHPHPGGQTPEPEEPPGAPQVEEEGAED) is disordered. Residues 140–160 (SPGSQPGPHSHAHPHPGGQTP) are compositionally biased toward low complexity.

This sequence belongs to the DAN family. As to quaternary structure, homodimer.

Its subcellular location is the secreted. Functionally, possible candidate as a tumor suppressor gene of neuroblastoma. May play an important role in preventing cells from entering the final stage (G1/S) of the transformation process. The protein is Neuroblastoma suppressor of tumorigenicity 1 (Nbl1) of Mus musculus (Mouse).